The sequence spans 352 residues: Probable gamma-glutamyl hydrolase 3 (352 aa).

The signal sequence occupies residues 1–19 (MWRFCFFLSLLFFDVSAVK). One can recognise a Gamma-glutamyl hydrolase domain in the interval 49–352 (AADPNLNYKP…SGDDEVYIFT (304 aa)). Catalysis depends on C166, which acts as the Nucleophile. The active site involves H279.

The protein belongs to the peptidase C26 family.

It is found in the vacuole. Its subcellular location is the secreted. It localises to the extracellular space. The protein resides in the cell wall. It carries out the reaction (6S)-5,6,7,8-tetrahydrofolyl-(gamma-L-Glu)(n) + (n-1) H2O = (6S)-5,6,7,8-tetrahydrofolate + (n-1) L-glutamate. In terms of biological role, cleaves the polyglutamate sidechains of folate polyglutamates in the vacuole. Is important for polyglutamyl tail length determination before vacuolar exit. Plays a role on folate stability and intracellular folate content. In Arabidopsis thaliana (Mouse-ear cress), this protein is Probable gamma-glutamyl hydrolase 3 (GGH3).